We begin with the raw amino-acid sequence, 344 residues long: tRNA N6-adenosine threonylcarbamoyltransferase (344 aa).

His114 and His118 together coordinate Fe cation. Residues 136–140 (LVSGG), Asp170, Gly183, Asp187, and Asn278 each bind substrate. Asp306 contributes to the Fe cation binding site. The tract at residues 325 to 344 (PSPLDVPSDPGLPVMQGQVR) is disordered.

It belongs to the KAE1 / TsaD family. The cofactor is Fe(2+).

Its subcellular location is the cytoplasm. It catalyses the reaction L-threonylcarbamoyladenylate + adenosine(37) in tRNA = N(6)-L-threonylcarbamoyladenosine(37) in tRNA + AMP + H(+). Its function is as follows. Required for the formation of a threonylcarbamoyl group on adenosine at position 37 (t(6)A37) in tRNAs that read codons beginning with adenine. Is involved in the transfer of the threonylcarbamoyl moiety of threonylcarbamoyl-AMP (TC-AMP) to the N6 group of A37, together with TsaE and TsaB. TsaD likely plays a direct catalytic role in this reaction. In Mycobacterium tuberculosis (strain ATCC 25177 / H37Ra), this protein is tRNA N6-adenosine threonylcarbamoyltransferase.